Here is a 343-residue protein sequence, read N- to C-terminus: Heat-inducible transcription repressor HrcA (343 aa).

This sequence belongs to the HrcA family.

Functionally, negative regulator of class I heat shock genes (grpE-dnaK-dnaJ and groELS operons). Prevents heat-shock induction of these operons. This chain is Heat-inducible transcription repressor HrcA, found in Clostridium acetobutylicum (strain ATCC 824 / DSM 792 / JCM 1419 / IAM 19013 / LMG 5710 / NBRC 13948 / NRRL B-527 / VKM B-1787 / 2291 / W).